Consider the following 1088-residue polypeptide: DEAD-box ATP-dependent RNA helicase 40 (1088 aa).

Disordered regions lie at residues 1 to 28 (MATT…PWKG), 47 to 178 (TQYE…QYAH), and 192 to 254 (TQGL…QNTH). Ala2 carries the post-translational modification N-acetylalanine. Residues 20 to 54 (PTLPQPWKGLIDGSTGILYYWNPETNVTQYERPSA) enclose the WW domain. Composition is skewed to low complexity over residues 87–137 (VGHV…SQSM), 148–171 (QTYQ…MPQQ), and 200–215 (QTPQ…PSQQ). Over residues 222-231 (PKREGDEFHG) the composition is skewed to basic and acidic residues. The span at 236-254 (GFSQPHLPNSERSPSQNTH) shows a compositional bias: polar residues. The short motif at 435-463 (ITFESSGLPPEILRELLSAGFPSPTPIQA) is the Q motif element. One can recognise a Helicase ATP-binding domain in the interval 466–640 (WPIALQSRDI…SDLLVNPVQV (175 aa)). ATP is bound at residue 479 to 486 (AKTGSGKT). The DEAD box motif lies at 588 to 591 (DEAD). In terms of domain architecture, Helicase C-terminal spans 669–813 (RLEQILRSQE…QVPPQVRDIA (145 aa)). Gly residues-rich tracts occupy residues 861 to 885 (EGGF…GGRF), 893 to 902 (GRGGNRGRGF), 911 to 920 (NVGGRGGFGR), and 932 to 944 (FGRG…GRGV). The tract at residues 861-1033 (EGGFGGREGG…RRDRAPRVSG (173 aa)) is disordered. Residues 945–963 (GRFDNRRGRSRSRSPDLVR) are compositionally biased toward basic and acidic residues. Residues 969–983 (SSYSRSRSRSGSYSR) show a composition bias toward low complexity. The span at 984-1013 (SRSRSRSWSRSRSRSPRHSRDRGGHNRSRS) shows a compositional bias: basic residues.

This sequence belongs to the DEAD box helicase family. DDX5/DBP2 subfamily.

Its subcellular location is the nucleus. The enzyme catalyses ATP + H2O = ADP + phosphate + H(+). Functionally, ATP-dependent RNA helicase involved nonsense-mediated mRNA decay and ribosome biogenesis through rRNA processing. The sequence is that of DEAD-box ATP-dependent RNA helicase 40 (RH40) from Arabidopsis thaliana (Mouse-ear cress).